Here is a 119-residue protein sequence, read N- to C-terminus: Large ribosomal subunit protein bL20 (119 aa).

This sequence belongs to the bacterial ribosomal protein bL20 family.

Functionally, binds directly to 23S ribosomal RNA and is necessary for the in vitro assembly process of the 50S ribosomal subunit. It is not involved in the protein synthesizing functions of that subunit. This Colwellia psychrerythraea (strain 34H / ATCC BAA-681) (Vibrio psychroerythus) protein is Large ribosomal subunit protein bL20.